We begin with the raw amino-acid sequence, 545 residues long: Envelope glycoprotein E (545 aa).

Residues Met-1–Ala-20 form the signal peptide. Residues Ala-21–Arg-414 are Virion surface-facing. Residues Cys-61 to Cys-86 are interaction with gI. Asn-122 carries N-linked (GlcNAc...) asparagine; by host glycosylation. A disordered region spans residues Ala-162–Arg-206. Tyr-172 bears the Sulfotyrosine; by host mark. Residues Gly-179 to Phe-188 are compositionally biased toward low complexity. Pro residues predominate over residues Pro-189–His-204. The fc-binding stretch occupies residues Ala-230–Gln-375. Residue Asn-238 is glycosylated (N-linked (GlcNAc...) asparagine; by host). Intrachain disulfides connect Cys-266–Cys-292, Cys-275–Cys-284, and Cys-309–Cys-318. The interval Pro-386 to Ser-408 is disordered. A helical transmembrane segment spans residues Leu-415 to Cys-435. Residues Met-436–Trp-545 lie on the Intravirion side of the membrane. 2 consecutive short sequence motifs (internalization motif) follow at residues Tyr-458–Val-461 and Tyr-467–Trp-470. The tract at residues Glu-465 to Pro-490 is interaction with VP22 and UL11. The disordered stretch occupies residues Trp-470 to Trp-545. Phosphoserine; by host CK2 is present on residues Ser-471 and Ser-472. Residues Ser-471–Asp-479 are acidic. Positions Glu-475–Asp-491 are enriched in basic and acidic residues. Position 498 is a phosphoserine (Ser-498).

This sequence belongs to the alphaherpesvirinae glycoprotein E family. Interacts with gI; this interaction enhances the Fc receptor function of gE. The heterodimer gE/gI interacts with the Fc part of host IgG. Interacts (via C-terminus) with VP22 tegument protein; this interaction is necessary for the recruitment of VP22 to the Golgi and its packaging into virions. Interacts (via C-terminus) with UL11 tegument protein. Post-translationally, phosphorylated on serines within the acidic cluster. Phosphorylation determines whether endocytosed viral gE traffics to the trans-Golgi network or recycles to the cell membrane. In terms of processing, N-glycosylated, and sulfated.

It is found in the virion membrane. Its subcellular location is the host cell membrane. It localises to the host cell junction. The protein localises to the host Golgi apparatus membrane. The protein resides in the host endosome membrane. Functionally, in epithelial cells, the heterodimer gE/gI is required for the cell-to-cell spread of the virus, by sorting nascent virions to cell junctions. Once the virus reaches the cell junctions, virus particles can spread to adjacent cells extremely rapidly through interactions with cellular receptors that accumulate at these junctions. Implicated in basolateral spread in polarized cells. In neuronal cells, gE/gI is essential for the anterograde spread of the infection throughout the host nervous system. Together with US9, the heterodimer gE/gI is involved in the sorting and transport of viral structural components toward axon tips. The heterodimer gE/gI serves as a receptor for the Fc part of host IgG. Dissociation of gE/gI from IgG occurs at acidic pH. May thus be involved in anti-HSV antibodies bipolar bridging, followed by intracellular endocytosis and degradation, thereby interfering with host IgG-mediated immune responses. This Human herpesvirus 2 (strain HG52) (HHV-2) protein is Envelope glycoprotein E (gE).